The following is a 133-amino-acid chain: Small ribosomal subunit protein uS11 (133 aa).

Positions 1-23 (MPPKTRGAVRKPRKKDKKNIALG) are disordered. A compositionally biased stretch (basic residues) spans 7–17 (GAVRKPRKKDK).

The protein belongs to the universal ribosomal protein uS11 family. In terms of assembly, part of the 30S ribosomal subunit. Interacts with proteins S7 and S18. Binds to IF-3.

In terms of biological role, located on the platform of the 30S subunit, it bridges several disparate RNA helices of the 16S rRNA. Forms part of the Shine-Dalgarno cleft in the 70S ribosome. The polypeptide is Small ribosomal subunit protein uS11 (Arthrobacter sp. (strain FB24)).